Consider the following 709-residue polypeptide: Leucine-rich repeat and calponin homology domain-containing protein 1 (709 aa).

The span at 24–37 (LHQHHQHHQHHQHH) shows a compositional bias: basic residues. Residues 24-49 (LHQHHQHHQHHQHHGGTGGTGFNLPL) form a disordered region. LRR repeat units lie at residues 60 to 83 (AANS…TAPG), 86 to 108 (LSDT…ELCQ), 109 to 131 (FVSL…AIVN), 132 to 155 (LQML…LCGL), 157 to 176 (LKVL…EIGQ), 177 to 199 (LKQL…QIGQ), 200 to 223 (LKSL…LVDL), 225 to 244 (LVKF…CFRE), and 245 to 268 (MKQL…ICTK). Composition is skewed to basic and acidic residues over residues 301 to 312 (HQHVEDSKKDSD) and 381 to 390 (QEREQLAGRA). Residues 301–390 (HQHVEDSKKD…QEREQLAGRA (90 aa)) are disordered. Phosphoserine is present on residues serine 395, serine 518, and serine 522. Residues 504–526 (SNGSQYSPNEIRENSPSVSPTAN) form a disordered region. Threonine 581 is modified (phosphothreonine). In terms of domain architecture, Calponin-homology (CH) spans 589–702 (MREEKELVEQ…TTVQALLDVT (114 aa)).

In terms of assembly, interacts (via LRR repeats) with unphosphorylated DOCK8 (via DHR-2 domain); the interaction prevents the association between DOCK8 and CDC42.

It localises to the cytoplasm. Functionally, acts as a negative regulator of GTPase CDC42 by sequestering CDC42-guanine exchange factor DOCK8. Probably by preventing CDC42 activation, negatively regulates CD4(+) T-cell migration in response to chemokine stimulation. The protein is Leucine-rich repeat and calponin homology domain-containing protein 1 (Lrch1) of Mus musculus (Mouse).